Here is a 901-residue protein sequence, read N- to C-terminus: HTH-type transcriptional regulator MalT (901 aa).

Serine 39 to threonine 46 is a binding site for ATP. Positions glutamate 829 to leucine 894 constitute an HTH luxR-type domain. The H-T-H motif DNA-binding region spans asparagine 853–arginine 872.

Belongs to the MalT family. As to quaternary structure, monomer in solution. Oligomerizes to an active state in the presence of the positive effectors ATP and maltotriose.

Activated by ATP and maltotriose, which are both required for DNA binding. Functionally, positively regulates the transcription of the maltose regulon whose gene products are responsible for uptake and catabolism of malto-oligosaccharides. Specifically binds to the promoter region of its target genes, recognizing a short DNA motif called the MalT box. The protein is HTH-type transcriptional regulator MalT of Escherichia coli (strain ATCC 8739 / DSM 1576 / NBRC 3972 / NCIMB 8545 / WDCM 00012 / Crooks).